The primary structure comprises 378 residues: GDP-mannose 3,5-epimerase 1 (378 aa).

Residues 36 to 62 (GAGG…SDWK), aspartate 60, and aspartate 80 each bind NAD(+). Substrate-binding positions include glycine 105 and 145–147 (SAC). Tyrosine 175 and lysine 179 together coordinate NAD(+). Catalysis depends on tyrosine 175, which acts as the Proton acceptor. Residues asparagine 204, 217-219 (EKA), lysine 226, 242-244 (QTR), arginine 307, and serine 357 each bind substrate.

The protein belongs to the NAD(P)-dependent epimerase/dehydratase family. As to quaternary structure, homodimer. The cofactor is NAD(+).

The catalysed reaction is GDP-alpha-D-mannose = GDP-beta-L-gulose. It catalyses the reaction GDP-beta-L-gulose = GDP-beta-L-galactose. It functions in the pathway cofactor biosynthesis; L-ascorbate biosynthesis via GDP-alpha-D-mannose pathway; L-ascorbate from GDP-alpha-D-mannose: step 1/5. With respect to regulation, strongly activated by NAD. Activated by NADP. Slightly activated by NADH and NADPH. Inhibited by GDP. Its function is as follows. Catalyzes a reversible epimerization of GDP-D-mannose that precedes the committed step in the biosynthesis of vitamin C (L-ascorbate), resulting in the hydrolysis of the highly energetic glycosyl-pyrophosphoryl linkage. Able to catalyze 2 distinct epimerization reactions and can release both GDP-L-galactose and GDP-L-gulose from GDP-mannose. In Oryza sativa subsp. japonica (Rice), this protein is GDP-mannose 3,5-epimerase 1 (GME-1).